We begin with the raw amino-acid sequence, 289 residues long: Heme oxygenase 1, chloroplastic (289 aa).

The transit peptide at 1-64 directs the protein to the chloroplast; that stretch reads MAPAAASLTA…SASSSRRMVV (64 aa). Residue H96 participates in heme b binding.

It belongs to the heme oxygenase family.

It localises to the plastid. Its subcellular location is the chloroplast. It catalyses the reaction heme b + 3 reduced [NADPH--hemoprotein reductase] + 3 O2 = biliverdin IXalpha + CO + Fe(2+) + 3 oxidized [NADPH--hemoprotein reductase] + 3 H2O + H(+). Functionally, catalyzes the opening of the heme ring to form the open-chain tetrapyrrole biliverdin IX with the release of iron and carbon monoxide (CO). Is a key enzyme in the synthesis of the chromophore of the phytochrome family of plant photoreceptors. Essential for photoperiod response and repression of flowering through cytochromes that inhibit flowering by affecting both HD1 and EHD1 flowering pathways. The protein is Heme oxygenase 1, chloroplastic (HO1) of Oryza sativa subsp. japonica (Rice).